Reading from the N-terminus, the 538-residue chain is Putative outer membrane porin BglH (538 aa).

Residues 1–25 (MFRRNLITSAILLMAPLAFSAQSLA) form the signal peptide. The interval 52–82 (KDEEKKKYTPATVNRSVSTNDQGYAANPFPT) is disordered. The segment covering 62–73 (ATVNRSVSTNDQ) has biased composition (polar residues).

It belongs to the porin LamB (TC 1.B.3) family.

It is found in the cell outer membrane. May be a sugar porin with a broad carbohydrate specificity. In Shigella flexneri serotype 5b (strain 8401), this protein is Putative outer membrane porin BglH (bglH).